A 655-amino-acid chain; its full sequence is NADH-ubiquinone oxidoreductase chain 5 (655 aa).

Transmembrane regions (helical) follow at residues 3–23 (NAISLIIILPCISWLFPLFFG), 34–54 (MTSTLIIITTLITYYYFYQLL), 84–104 (LTITMLLAITTISSMVHIYSI), 116–136 (FFSLLSMFTFWMIILVTGSNY), 137–157 (FVLFVGWEFIGVTSYLLISFW), 180–200 (FFVLGLCVIAYVFGTLNYSTI), 204–224 (AYLINTDLLVLIMLALFIAAM), 244–264 (TPVSSLLHAATLVTAGIYLLL), 276–296 (VLFIILWIGALTTLSAGLIAI), 304–322 (IIALSTMSQLGMMTIAIGL), 332–354 (LLGHAFFKALLFMSAGSIIHSIL), 370–390 (LPYTYICITIASLSLMAMPGL), 413–433 (VVYWIAYLSAVLTCVYSMKIL), 456–476 (IYITLPMFILAIFAMFAGWIL), 516–536 (ISAILVSILIVVLNEFFAIVF), and 629–649 (LLLVLVMNVNFIIVIPVLISI).

The protein belongs to the complex I subunit 5 family. Complex I is composed of 37 different subunits.

The protein resides in the mitochondrion inner membrane. The catalysed reaction is a ubiquinone + NADH + 5 H(+)(in) = a ubiquinol + NAD(+) + 4 H(+)(out). Core subunit of the mitochondrial membrane respiratory chain NADH dehydrogenase (Complex I) that is believed to belong to the minimal assembly required for catalysis. Complex I functions in the transfer of electrons from NADH to the respiratory chain. The immediate electron acceptor for the enzyme is believed to be ubiquinone. The polypeptide is NADH-ubiquinone oxidoreductase chain 5 (ND5) (Yarrowia lipolytica (strain CLIB 122 / E 150) (Yeast)).